The chain runs to 621 residues: MLAASTRTRQINITCDNPVDREVFLHYSLIPSLCIILVLSFLQRREHRRQRDDTSYLLGNHFGIIVPLDFVGTFSNRWSYGAAFGATANKVMFLFSEGYQPLTVPQWAQAFVLFIGGMEVGLSYFPFFACLSSEFQLVSSILGFSYSLTWFVVTVLQISQCPHGQFLGRFETLVFYWPSLLCLGFLLGRFLHMFLKALPVHLGLEPQTEEKSMLEAHQAKHVKQLLSKPRPQEGEKSWFQTRVYEWDPCFQFPSRMVGTLLLAFICLYLFIVIEFCVFLHVRDKLDMFEDKLESYLTHMNETGTLTPIILQVKELISVTKGVWVVTILPAALTCVTYLFHILACYRKHMKRLWAGDKHFLPQKFHSPSSAASVVAIARYSGWQIAYILWGYLIIHVVQSLCGVMLMYGLVLPIIHHRGLEMLQGFGLGVLTLSIVVGLIILQVWIAGTFFLQPKLGTSDKQKPLALNNRRAFHNFNYFLFFYNVLLGLGACLSRLLISCLLGTWLIARIDRTIMQSGYEGADMGFGAWIGMLFVDHYHTNPVLVSFCHILITSHKDRKLQKTVKYWCLNQSAGPRFSARARTRWFLLQTLINNPRLVMLRKSKSGHSSGEFTQILLTCSDC.

At 1–21 (MLAASTRTRQINITCDNPVDR) the chain is on the extracellular side. A glycan (N-linked (GlcNAc...) asparagine) is linked at N12. The helical transmembrane segment at 22-42 (EVFLHYSLIPSLCIILVLSFL) threads the bilayer. The Cytoplasmic segment spans residues 43–53 (QRREHRRQRDD). The chain crosses the membrane as a helical span at residues 54–74 (TSYLLGNHFGIIVPLDFVGTF). Topologically, residues 75–110 (SNRWSYGAAFGATANKVMFLFSEGYQPLTVPQWAQA) are extracellular. The chain crosses the membrane as a helical span at residues 111–131 (FVLFIGGMEVGLSYFPFFACL). Topologically, residues 132–137 (SSEFQL) are cytoplasmic. Residues 138 to 158 (VSSILGFSYSLTWFVVTVLQI) traverse the membrane as a helical segment. Residues 159-173 (SQCPHGQFLGRFETL) are Extracellular-facing. Residues 174 to 194 (VFYWPSLLCLGFLLGRFLHMF) form a helical membrane-spanning segment. Over 195–258 (LKALPVHLGL…CFQFPSRMVG (64 aa)) the chain is Cytoplasmic. The chain crosses the membrane as a helical span at residues 259-279 (TLLLAFICLYLFIVIEFCVFL). Residues 280-321 (HVRDKLDMFEDKLESYLTHMNETGTLTPIILQVKELISVTKG) are Extracellular-facing. Residues 322–342 (VWVVTILPAALTCVTYLFHIL) traverse the membrane as a helical segment. At 343-383 (ACYRKHMKRLWAGDKHFLPQKFHSPSSAASVVAIARYSGWQ) the chain is on the cytoplasmic side. Residues 384–404 (IAYILWGYLIIHVVQSLCGVM) form a helical membrane-spanning segment. The Extracellular segment spans residues 405 to 424 (LMYGLVLPIIHHRGLEMLQG). Residues 425–445 (FGLGVLTLSIVVGLIILQVWI) traverse the membrane as a helical segment. Topologically, residues 446 to 476 (AGTFFLQPKLGTSDKQKPLALNNRRAFHNFN) are cytoplasmic. A helical transmembrane segment spans residues 477–497 (YFLFFYNVLLGLGACLSRLLI). Over 498-621 (SCLLGTWLIA…TQILLTCSDC (124 aa)) the chain is Extracellular. T612 is modified (phosphothreonine).

Post-translationally, glycosylated. In terms of tissue distribution, highly expressed in liver and small intestine. Also expressed in spleen, kidney, colon, stomach, placenta, adipose tissue and isolated adipocytes.

Its subcellular location is the cell membrane. In terms of biological role, acts as a high-affinity cell-surface receptor for retinol-binding protein RBP4 and mediates RBP4-dependent retinol uptake in the liver. In Mus musculus (Mouse), this protein is Stimulated by retinoic acid gene 6 protein-like.